A 302-amino-acid polypeptide reads, in one-letter code: Protein ECM11 (302 aa).

2 disordered regions span residues Met1–Gln67 and Ser162–Gln187. Residues Asn35–Gly46 are compositionally biased toward polar residues. The span at Ala56–Gln67 shows a compositional bias: basic and acidic residues. Over residues Ser162 to Pro171 the composition is skewed to polar residues.

In terms of assembly, interacts with CDC6.

The protein resides in the nucleus. May be involved in cell wall organization and biogenesis. This is Protein ECM11 (ECM11) from Saccharomyces cerevisiae (strain ATCC 204508 / S288c) (Baker's yeast).